Reading from the N-terminus, the 451-residue chain is E3 ubiquitin-protein ligase trul-1 (451 aa).

Residues 13-54 (CSICFEDLKQNDKISAIVCGHIYHHGCISQWIATKRQCPSCR) form an RING-type; atypical zinc finger. Coiled coils occupy residues 96 to 130 (LKVE…EKDK) and 209 to 243 (NKDL…DAAI). Disordered stretches follow at residues 270 to 297 (RDVL…MIDP) and 389 to 442 (KIPN…SSTS). The span at 427 to 442 (STRISSFFSRTTSSTS) shows a compositional bias: low complexity.

Belongs to the TRAIP family.

The protein localises to the nucleus. It localises to the chromosome. The enzyme catalyses S-ubiquitinyl-[E2 ubiquitin-conjugating enzyme]-L-cysteine + [acceptor protein]-L-lysine = [E2 ubiquitin-conjugating enzyme]-L-cysteine + N(6)-ubiquitinyl-[acceptor protein]-L-lysine.. Its pathway is protein modification; protein ubiquitination. Its function is as follows. E3 ubiquitin ligase that acts as a key regulator of DNA repair in response to replication stress. Acts by mediating ubiquitination of the CMG helicase complex, promoting the unloading of the CMG helicase complex by the p97 ATPase (cdc-48.1 or cdc-48.2). This Caenorhabditis elegans protein is E3 ubiquitin-protein ligase trul-1.